The sequence spans 517 residues: GMP synthase [glutamine-hydrolyzing] (517 aa).

The 191-residue stretch at 9 to 199 folds into the Glutamine amidotransferase type-1 domain; the sequence is RILILDFGSQ…VLNVCGCEGL (191 aa). Cysteine 86 serves as the catalytic Nucleophile. Catalysis depends on residues histidine 173 and glutamate 175. One can recognise a GMPS ATP-PPase domain in the interval 200-392; that stretch reads WTSASIIEDA…LGLPYNMLYR (193 aa). 227–233 provides a ligand contact to ATP; it reads SGGVDSS.

Homodimer.

It catalyses the reaction XMP + L-glutamine + ATP + H2O = GMP + L-glutamate + AMP + diphosphate + 2 H(+). It functions in the pathway purine metabolism; GMP biosynthesis; GMP from XMP (L-Gln route): step 1/1. Its function is as follows. Catalyzes the synthesis of GMP from XMP. The chain is GMP synthase [glutamine-hydrolyzing] from Aliivibrio fischeri (strain ATCC 700601 / ES114) (Vibrio fischeri).